Consider the following 105-residue polypeptide: Small ribosomal subunit protein uS10 (105 aa).

Belongs to the universal ribosomal protein uS10 family. As to quaternary structure, part of the 30S ribosomal subunit.

In terms of biological role, involved in the binding of tRNA to the ribosomes. The chain is Small ribosomal subunit protein uS10 from Lachnoclostridium phytofermentans (strain ATCC 700394 / DSM 18823 / ISDg) (Clostridium phytofermentans).